The chain runs to 321 residues: Lipoyl synthase (321 aa).

The [4Fe-4S] cluster site is built by cysteine 68, cysteine 73, cysteine 79, cysteine 94, cysteine 98, cysteine 101, and serine 308. In terms of domain architecture, Radical SAM core spans 80–297 (FNHGTATFMI…KAEAIAMGFT (218 aa)).

The protein belongs to the radical SAM superfamily. Lipoyl synthase family. [4Fe-4S] cluster is required as a cofactor.

It localises to the cytoplasm. It carries out the reaction [[Fe-S] cluster scaffold protein carrying a second [4Fe-4S](2+) cluster] + N(6)-octanoyl-L-lysyl-[protein] + 2 oxidized [2Fe-2S]-[ferredoxin] + 2 S-adenosyl-L-methionine + 4 H(+) = [[Fe-S] cluster scaffold protein] + N(6)-[(R)-dihydrolipoyl]-L-lysyl-[protein] + 4 Fe(3+) + 2 hydrogen sulfide + 2 5'-deoxyadenosine + 2 L-methionine + 2 reduced [2Fe-2S]-[ferredoxin]. The protein operates within protein modification; protein lipoylation via endogenous pathway; protein N(6)-(lipoyl)lysine from octanoyl-[acyl-carrier-protein]: step 2/2. In terms of biological role, catalyzes the radical-mediated insertion of two sulfur atoms into the C-6 and C-8 positions of the octanoyl moiety bound to the lipoyl domains of lipoate-dependent enzymes, thereby converting the octanoylated domains into lipoylated derivatives. This chain is Lipoyl synthase, found in Pectobacterium carotovorum subsp. carotovorum (strain PC1).